Reading from the N-terminus, the 194-residue chain is Peptidyl-tRNA hydrolase (194 aa).

Tyrosine 17 serves as a coordination point for tRNA. The active-site Proton acceptor is the histidine 22. The tRNA site is built by tyrosine 68, asparagine 70, and asparagine 116.

Belongs to the PTH family. In terms of assembly, monomer.

Its subcellular location is the cytoplasm. The enzyme catalyses an N-acyl-L-alpha-aminoacyl-tRNA + H2O = an N-acyl-L-amino acid + a tRNA + H(+). In terms of biological role, hydrolyzes ribosome-free peptidyl-tRNAs (with 1 or more amino acids incorporated), which drop off the ribosome during protein synthesis, or as a result of ribosome stalling. Functionally, catalyzes the release of premature peptidyl moieties from peptidyl-tRNA molecules trapped in stalled 50S ribosomal subunits, and thus maintains levels of free tRNAs and 50S ribosomes. In Pseudomonas syringae pv. syringae (strain B728a), this protein is Peptidyl-tRNA hydrolase.